Consider the following 451-residue polypeptide: Methylenetetrahydrofolate--tRNA-(uracil-5-)-methyltransferase TrmFO (451 aa).

10–15 (GGGLAG) serves as a coordination point for FAD.

Belongs to the MnmG family. TrmFO subfamily. The cofactor is FAD.

The protein localises to the cytoplasm. It carries out the reaction uridine(54) in tRNA + (6R)-5,10-methylene-5,6,7,8-tetrahydrofolate + NADH + H(+) = 5-methyluridine(54) in tRNA + (6S)-5,6,7,8-tetrahydrofolate + NAD(+). The catalysed reaction is uridine(54) in tRNA + (6R)-5,10-methylene-5,6,7,8-tetrahydrofolate + NADPH + H(+) = 5-methyluridine(54) in tRNA + (6S)-5,6,7,8-tetrahydrofolate + NADP(+). Functionally, catalyzes the folate-dependent formation of 5-methyl-uridine at position 54 (M-5-U54) in all tRNAs. In Anaeromyxobacter sp. (strain Fw109-5), this protein is Methylenetetrahydrofolate--tRNA-(uracil-5-)-methyltransferase TrmFO.